A 306-amino-acid polypeptide reads, in one-letter code: Agmatinase (306 aa).

Residues histidine 126, aspartate 149, histidine 151, aspartate 153, aspartate 230, and aspartate 232 each contribute to the Mn(2+) site.

It belongs to the arginase family. Agmatinase subfamily. It depends on Mn(2+) as a cofactor.

It catalyses the reaction agmatine + H2O = urea + putrescine. It functions in the pathway amine and polyamine biosynthesis; putrescine biosynthesis via agmatine pathway; putrescine from agmatine: step 1/1. Functionally, catalyzes the formation of putrescine from agmatine. This is Agmatinase from Escherichia coli (strain K12 / DH10B).